Consider the following 321-residue polypeptide: Iron(3+)-hydroxamate-binding protein YxeB (321 aa).

Positions 1–20 (MKKNILLVGMLVLLLMFVSA) are cleaved as a signal peptide. Cys-21 carries N-palmitoyl cysteine lipidation. Cys-21 carries the S-diacylglycerol cysteine lipid modification. Over residues 24–33 (TASKGSSSDS) the composition is skewed to low complexity. Residues 24–48 (TASKGSSSDSASEKTEMRTYKSPKG) form a disordered region. In terms of domain architecture, Fe/B12 periplasmic-binding spans 58-316 (RIVTDFYAGE…IITDMLIKRA (259 aa)).

This sequence belongs to the bacterial solute-binding protein 8 family. In terms of assembly, the complex is composed of an ATP-binding protein (FhuC), two transmembrane proteins (FhuB and FhuG) and a solute-binding protein (FhuD or YxeB).

Its subcellular location is the cell membrane. It localises to the membrane raft. Its function is as follows. Part of the ABC transporter complex FhuCBGD involved in iron(3+)-hydroxamate import. Binds the iron(3+)-hydroxamate complex and transfers it to the membrane-bound permease. Partially required for the transport of desferrioxamine. This Bacillus subtilis (strain 168) protein is Iron(3+)-hydroxamate-binding protein YxeB (yxeB).